The primary structure comprises 458 residues: NADH-quinone oxidoreductase subunit N (458 aa).

The next 13 membrane-spanning stretches (helical) occupy residues 3–23, 29–49, 64–84, 92–112, 147–167, 188–208, 222–242, 265–285, 291–311, 320–340, 358–378, 394–414, and 437–457; these read QYLF…LLFL, FGLI…TCTS, QNVK…AIAV, FSVL…SSTL, TLLG…IFVV, ILLF…HAWI, FFAV…ISNL, NILF…AFGQ, FIGF…SNSA, IAYA…VLML, VALA…FIGF, IPTA…YARI, and LLTS…VLLI.

It belongs to the complex I subunit 2 family. NDH-1 is composed of 14 different subunits. Subunits NuoA, H, J, K, L, M, N constitute the membrane sector of the complex.

It localises to the cell inner membrane. It catalyses the reaction a quinone + NADH + 5 H(+)(in) = a quinol + NAD(+) + 4 H(+)(out). NDH-1 shuttles electrons from NADH, via FMN and iron-sulfur (Fe-S) centers, to quinones in the respiratory chain. The immediate electron acceptor for the enzyme in this species is believed to be ubiquinone. Couples the redox reaction to proton translocation (for every two electrons transferred, four hydrogen ions are translocated across the cytoplasmic membrane), and thus conserves the redox energy in a proton gradient. This Neorickettsia risticii (strain Illinois) protein is NADH-quinone oxidoreductase subunit N.